The following is a 285-amino-acid chain: Nurim (285 aa).

Over 1–16 (MSANVQVSGQLSSGPS) the chain is Nuclear. Residues 17–44 (LPACIVLSAVSLLCFVAGFGTGAEFVRF) form a helical membrane-spanning segment. Over 45-74 (LSFGAIFRNISGGLDGEIPLTWSEAIRNTQ) the chain is Perinuclear space. A helical membrane pass occupies residues 75–96 (FQCCIGIDIGLLFLFVLQHSLM). Topologically, residues 97-113 (AWTAVKKNVLHVFGVLQ) are nuclear. Residues 114 to 130 (RSIYILCTALSLQVLMR) traverse the membrane as a helical segment. Residues 131-149 (FWQPCPHGPYLWNVSSDPW) lie on the Perinuclear space side of the membrane. The helical transmembrane segment at 150 to 180 (SAWLPLLCALVHTISWLLIFSVLLIFDYAEL) threads the bilayer. The Nuclear portion of the chain corresponds to 181–207 (MGIKQVYYFCLGMGDPLSHKSPRVARL). A helical transmembrane segment spans residues 208 to 226 (YAHLRHPIYLELLLILWAV). The Perinuclear space portion of the chain corresponds to 227–232 (PCLPPD). The helical transmembrane segment at 233-250 (RLILAIFFTLYLSLVHRL) threads the bilayer. The Nuclear portion of the chain corresponds to 251–285 (DVQDYAYLRSQLEKKFLLFSREEASAVGGQIRKNN).

This sequence belongs to the nurim family.

It is found in the nucleus inner membrane. This Xenopus laevis (African clawed frog) protein is Nurim (nrm).